The following is a 240-amino-acid chain: Small ribosomal subunit protein uS2c (240 aa).

It belongs to the universal ribosomal protein uS2 family.

The protein localises to the plastid. Its subcellular location is the chloroplast. This Cycas taitungensis (Prince sago) protein is Small ribosomal subunit protein uS2c (rps2).